The following is a 490-amino-acid chain: Dual specificity protein kinase CLK3 (490 aa).

The interval 1–138 (MHHCKRYRSP…SKRSSRSVED (138 aa)) is disordered. Position 7 is a phosphotyrosine (Y7). S9, S49, S51, S67, S76, and S78 each carry phosphoserine. 2 stretches are compositionally biased toward basic and acidic residues: residues 26–56 (YSRE…DRIP) and 63–76 (EHRD…EERS). The span at 88–116 (RSRHRRRSRERAPYRTRKHAHHCHKRRTR) shows a compositional bias: basic residues. Positions 117–130 (SCSSASSRSQQSSK) are enriched in low complexity. The residue at position 135 (S135) is a Phosphoserine. The Protein kinase domain maps to 156 to 472 (YEIVGNLGEG…LAEALLHPFF (317 aa)). ATP contacts are provided by residues 162–170 (LGEGTFGKV) and K186. Residue D283 is the Proton acceptor of the active site.

Belongs to the protein kinase superfamily. CMGC Ser/Thr protein kinase family. Lammer subfamily. In terms of processing, autophosphorylates on all three types of residues. As to expression, present at high levels in testis and ovary. In testis, expression is restricted to elongated, maturing spermatozoa. Also present in spleen, brain, lung and liver (at protein level).

Its subcellular location is the nucleus. The protein resides in the cytoplasm. The protein localises to the cytoplasmic vesicle. It localises to the secretory vesicle. It is found in the acrosome. It carries out the reaction L-seryl-[protein] + ATP = O-phospho-L-seryl-[protein] + ADP + H(+). It catalyses the reaction L-threonyl-[protein] + ATP = O-phospho-L-threonyl-[protein] + ADP + H(+). The catalysed reaction is L-tyrosyl-[protein] + ATP = O-phospho-L-tyrosyl-[protein] + ADP + H(+). With respect to regulation, leucettine L41 inhibits its kinase activity and affects the regulation of alternative splicing mediated by phosphorylation of SR proteins. Dual specificity kinase acting on both serine/threonine and tyrosine-containing substrates. Phosphorylates serine- and arginine-rich (SR) proteins of the spliceosomal complex. May be a constituent of a network of regulatory mechanisms that enable SR proteins to control RNA splicing and can cause redistribution of SR proteins from speckles to a diffuse nucleoplasmic distribution. Phosphorylates SRSF1 and SRSF3. Regulates the alternative splicing of tissue factor (F3) pre-mRNA in endothelial cells. This is Dual specificity protein kinase CLK3 from Mus musculus (Mouse).